Consider the following 875-residue polypeptide: Phosphoenolpyruvate carboxylase (875 aa).

Catalysis depends on residues histidine 137 and lysine 542.

It belongs to the PEPCase type 1 family. Mg(2+) serves as cofactor.

The catalysed reaction is oxaloacetate + phosphate = phosphoenolpyruvate + hydrogencarbonate. Functionally, forms oxaloacetate, a four-carbon dicarboxylic acid source for the tricarboxylic acid cycle. The sequence is that of Phosphoenolpyruvate carboxylase from Pseudomonas entomophila (strain L48).